Here is a 1351-residue protein sequence, read N- to C-terminus: Alpha-latrotoxin-Lh1a (1351 aa).

The N-terminal stretch at 1–7 is a signal peptide; the sequence is SLVRMRR. The segment at 4-7 is furin-like endopeptidase recognition region; sequence RMRR. Positions 226-245 are helix H8 is the probable transmembrane region of the tetrameric pore inserted in the target cell membrane; the sequence is VLYALLYGTQTYVSVMFFLL. Cys401 and Cys1054 are joined by a disulfide. ANK repeat units follow at residues 446–477, 478–509, 513–542, 547–577, 581–610, 614–644, 648–678, 683–711, 717–746, 750–779, 783–812, 816–846, 850–879, 883–912, 916–945, 959–991, 992–1019, 1023–1052, 1056–1085, 1089–1119, 1125–1154, and 1158–1187; these read LYNTANNPDSAVGFKEFTKLNYDGANIRATFE, QGRTVFHAAAKSGNSRIMIGLTFLVKSNELNQ, KGYTPIHVAADSGNAGIVNLLIQRGVSINS, FLQTPLHLAAQRGFVTTFQRLMESPEININE, DGFTPLHYAVRGGERILEAFINQIRIDLNA, KGLTPFHLAIIKDDWPVASTLLGSKKVDVNA, NNMTALHYAAILGYLETTKQLINLKEINADV, GLLSALHYAILYKHDDVASFLLRSSNVNV, GGITPLHLAVIQGRTQILSLMFDIGVNIEQ, EKYTPLHLAAMSKYPELIQILLDQGSNFEA, SGATPLHLATFKGKSKAALILLNNEVNWRD, NGQMPIHGAAMNGLLDVAQAIISIDATVLDI, NSDTPLNLAAQKSHIDVIKYFIDQGADINT, TGHAPLLAFSKKGNLDMVKYLFDKNANVYI, DGINFFYYAVRNGHLNIVKYAMSEKDKFEW, EECAISHFAVCDAVQFDKIEIVKYFVTTLGNFA, ICGPLHQAARYGHLDIEKYLVEEEDLNV, KPDTPLCYASENGHLAVVQYLVSNGAKVNH, NGMTAIDKAITKNHLQVVQFLAANGVDFRR, LGATPFLTAVSENAFDIAEYLIRENRQDIDI, DKETALHLAVYYKNLQMIKLLVKYGIDMTI, and YDKTALDIATDLKNSNIVEYLKTKSGKFRR. A furin-like endopeptidase recognition region region spans residues 1184–1187; sequence KFRR. The propeptide occupies 1188 to 1351; it reads EYKSSYGEHS…LGSVIMNSHS (164 aa).

Belongs to the cationic peptide 01 (latrotoxin) family. 03 (alpha-latrotoxin) subfamily. In terms of assembly, homotetramer in membranes. Post-translationally, processed by furin-like proteases at both the N- and C-termini. Expressed in venom gland, cephalothorax, and abdomen tissues from both males and females.

The protein localises to the secreted. It is found in the target cell membrane. Its function is as follows. Presynaptic neurotoxin that causes massive release of neurotransmitters from vertebrate (but not invertebrate) nerve terminals and endocrine cells via a complex mechanism involving activation of receptor(s) and toxin insertion into the plasma membrane with subsequent pore formation. Binds to neurexin-1-alpha (NRXN1) in a calcium dependent manner, adhesion G protein-coupled receptor L1 (ADGRL1, also termed latrophilin-1 and calcium-independent receptor of latrotoxin (CIRL)), and receptor-type tyrosine-protein phosphatase S (PTPRS), also termed PTP sigma. NRXN1 and PTPRS are suggested to provide a platform for binding and subsequent pore formation events. In contrast, binding to ADGRL1 does not involve oligomerization and channel formation, but direct downstream stimulation of the synaptic fusion machinery. Induces rapid muscle contracture and loss of twitch tension when added to the isolated and indirectly stimulated chick biventer cervicis nerve-muscle preparation. This chain is Alpha-latrotoxin-Lh1a, found in Latrodectus hasselti (Redback spider).